Here is a 296-residue protein sequence, read N- to C-terminus: Mycothiol acetyltransferase (296 aa).

N-acetyltransferase domains follow at residues 17–146 and 156–296; these read YNHR…AVYD and LKTA…VYEK. Glutamate 44 serves as a coordination point for 1D-myo-inositol 2-(L-cysteinylamino)-2-deoxy-alpha-D-glucopyranoside. 81-83 lines the acetyl-CoA pocket; that stretch reads LAV. Glutamate 183, lysine 222, and glutamate 230 together coordinate 1D-myo-inositol 2-(L-cysteinylamino)-2-deoxy-alpha-D-glucopyranoside. Acetyl-CoA-binding positions include 234–236 and 241–247; these read VGL and RGKGLGD. 1D-myo-inositol 2-(L-cysteinylamino)-2-deoxy-alpha-D-glucopyranoside is bound at residue tyrosine 268.

Belongs to the acetyltransferase family. MshD subfamily. Monomer.

It catalyses the reaction 1D-myo-inositol 2-(L-cysteinylamino)-2-deoxy-alpha-D-glucopyranoside + acetyl-CoA = mycothiol + CoA + H(+). Its function is as follows. Catalyzes the transfer of acetyl from acetyl-CoA to desacetylmycothiol (Cys-GlcN-Ins) to form mycothiol. The protein is Mycothiol acetyltransferase of Corynebacterium efficiens (strain DSM 44549 / YS-314 / AJ 12310 / JCM 11189 / NBRC 100395).